Reading from the N-terminus, the 135-residue chain is Cytochrome b5 (135 aa).

Residues 4-80 (SKVYSLAEVS…MDEMCVGDID (77 aa)) form the Cytochrome b5 heme-binding domain. Residues His-39 and His-63 each contribute to the heme site. The helical transmembrane segment at 106–126 (FIIKLLQFLVPLIILGVAVGI) threads the bilayer.

The protein belongs to the cytochrome b5 family.

It is found in the endoplasmic reticulum membrane. Its subcellular location is the microsome membrane. Membrane bound hemoprotein which function as an electron carrier for several membrane bound oxygenases. The chain is Cytochrome b5 from Cuscuta reflexa (Southern Asian dodder).